The chain runs to 498 residues: Cytochrome P450 monooxygenase apdB (498 aa).

Residues 20 to 40 traverse the membrane as a helical segment; sequence ASPQVFKLFVLILFVLLVLKI. Cysteine 457 serves as a coordination point for heme.

The protein belongs to the cytochrome P450 family. Heme is required as a cofactor.

The protein resides in the membrane. It participates in secondary metabolite biosynthesis. Cytochrome P450 monooxygenase; part of the gene cluster that mediates the biosynthesis of aspyridones. The polyketide-amino acid backbone preaspyridone A is first assembled by the PKS-NRPS hybrid apdA. The assembly of preaspyridone A is initiated by loading of malonyl-CoA onto apdA, followed by decarboxylation to yield the acetyl starter unit. The growing polyketide chain then elongates into a tetraketide. The adpA PKS module catalyzes three Claisen condensations, as well as beta-keto processing and methylation. Alpha-methylation step during polyketide synthesis is a prerequisite and a key checkpoint for chain transfer between PKS and NRPS modules. The downstream NRPS module contains the condensation (C), adenylation (A), and thiolation (T) domains and catalyzes the incorporation of tyrosine via the formation of the L-tyrosinyl-thioester and the amide linkage between L-tyrosinyl-thioester and the tetraketide. The bimodular assembly line is terminated with a reductase (R) domain that facilitates formation and release of the tetramic acid product. Because apdA lacks a designated enoylreductase (ER) domain, the required activity is provided the enoyl reductase apdC. ApdC appears to operate with different stereoselectivity in different PKS cycle. Combined with apdC, apdA is proposed to synthesize preaspyridone A via about 20 enzymatic steps. A number of oxidative steps performed successively by the cytochrome P450 monooxygenases apdE and apdB are required for the conversion of preaspyridone A to aspyridone A. The cytochrome P450 monooxygenase apdE is responsible for the oxidative dephenylation of preaspyridone A. Finally, the predicted FAD-dependent monooxygenase apdD and the acyl-CoA dehydrogenase apdG may be involved in the transformation of aspyridone A into aspyridone B. This is Cytochrome P450 monooxygenase apdB from Emericella nidulans (strain FGSC A4 / ATCC 38163 / CBS 112.46 / NRRL 194 / M139) (Aspergillus nidulans).